A 69-amino-acid chain; its full sequence is Putative membrane protein insertion efficiency factor (69 aa).

This sequence belongs to the UPF0161 family.

Its subcellular location is the cell inner membrane. Its function is as follows. Could be involved in insertion of integral membrane proteins into the membrane. The protein is Putative membrane protein insertion efficiency factor of Azoarcus sp. (strain BH72).